The following is a 230-amino-acid chain: Biosynthetic peptidoglycan transglycosylase (230 aa).

A helical transmembrane segment spans residues 11–31 (VLLVLVALFVLYQLWIFTLVL).

The protein belongs to the glycosyltransferase 51 family.

Its subcellular location is the cell inner membrane. The enzyme catalyses [GlcNAc-(1-&gt;4)-Mur2Ac(oyl-L-Ala-gamma-D-Glu-L-Lys-D-Ala-D-Ala)](n)-di-trans,octa-cis-undecaprenyl diphosphate + beta-D-GlcNAc-(1-&gt;4)-Mur2Ac(oyl-L-Ala-gamma-D-Glu-L-Lys-D-Ala-D-Ala)-di-trans,octa-cis-undecaprenyl diphosphate = [GlcNAc-(1-&gt;4)-Mur2Ac(oyl-L-Ala-gamma-D-Glu-L-Lys-D-Ala-D-Ala)](n+1)-di-trans,octa-cis-undecaprenyl diphosphate + di-trans,octa-cis-undecaprenyl diphosphate + H(+). It functions in the pathway cell wall biogenesis; peptidoglycan biosynthesis. Its function is as follows. Peptidoglycan polymerase that catalyzes glycan chain elongation from lipid-linked precursors. The sequence is that of Biosynthetic peptidoglycan transglycosylase from Aromatoleum aromaticum (strain DSM 19018 / LMG 30748 / EbN1) (Azoarcus sp. (strain EbN1)).